The chain runs to 345 residues: Probable dual-specificity RNA methyltransferase RlmN (345 aa).

Glutamate 90 acts as the Proton acceptor in catalysis. The 231-residue stretch at 96 to 326 (YDYGNSICIS…STIRKEMGAD (231 aa)) folds into the Radical SAM core domain. A disulfide bond links cysteine 103 and cysteine 331. [4Fe-4S] cluster-binding residues include cysteine 110, cysteine 114, and cysteine 117. Residues 157 to 158 (GE), serine 189, 212 to 214 (SLH), and asparagine 288 contribute to the S-adenosyl-L-methionine site. The S-methylcysteine intermediate role is filled by cysteine 331.

It belongs to the radical SAM superfamily. RlmN family. Requires [4Fe-4S] cluster as cofactor.

The protein resides in the cytoplasm. It catalyses the reaction adenosine(2503) in 23S rRNA + 2 reduced [2Fe-2S]-[ferredoxin] + 2 S-adenosyl-L-methionine = 2-methyladenosine(2503) in 23S rRNA + 5'-deoxyadenosine + L-methionine + 2 oxidized [2Fe-2S]-[ferredoxin] + S-adenosyl-L-homocysteine. The catalysed reaction is adenosine(37) in tRNA + 2 reduced [2Fe-2S]-[ferredoxin] + 2 S-adenosyl-L-methionine = 2-methyladenosine(37) in tRNA + 5'-deoxyadenosine + L-methionine + 2 oxidized [2Fe-2S]-[ferredoxin] + S-adenosyl-L-homocysteine. Its function is as follows. Specifically methylates position 2 of adenine 2503 in 23S rRNA and position 2 of adenine 37 in tRNAs. The chain is Probable dual-specificity RNA methyltransferase RlmN from Clostridium acetobutylicum (strain ATCC 824 / DSM 792 / JCM 1419 / IAM 19013 / LMG 5710 / NBRC 13948 / NRRL B-527 / VKM B-1787 / 2291 / W).